Here is a 346-residue protein sequence, read N- to C-terminus: Free fatty acid receptor 3 (346 aa).

The Extracellular segment spans residues 1-19; sequence MDTGPDQSYFSGNHWFVFS. Residues 20-40 form a helical membrane-spanning segment; the sequence is VYLLTFLVGLPLNLLALVVFV. The Cytoplasmic portion of the chain corresponds to 41 to 47; sequence GKLQRRP. A helical membrane pass occupies residues 48-68; sequence VAVDVLLLNLTASDLLLLLFL. Over 69-88 the chain is Extracellular; sequence PFRMVEAANGMHWPLPFILC. Cysteine 88 and cysteine 169 are disulfide-bonded. Residues 89–111 form a helical membrane-spanning segment; it reads PLSGFIFFTTIYLTALFLAAVSI. Topologically, residues 112–132 are cytoplasmic; the sequence is ERFLSVAHPLWYKTRPRLGQA. The chain crosses the membrane as a helical span at residues 133–153; the sequence is GLVSVACWLLASAHCSVVYVI. At 154-178 the chain is on the extracellular side; sequence EFSGDISHSQGTNGTCYLEFRKDQL. A glycan (N-linked (GlcNAc...) asparagine) is linked at asparagine 166. A helical membrane pass occupies residues 179–199; that stretch reads AILLPVRLEMAVVLFVVPLII. At 200–222 the chain is on the cytoplasmic side; sequence TSYCYSRLVWILGRGGSHRRQRR. A helical membrane pass occupies residues 223-243; sequence VAGLLAATLLNFLVCFGPYNV. Topologically, residues 244-258 are extracellular; that stretch reads SHVVGYICGESPAWR. A helical membrane pass occupies residues 259–279; sequence IYVTLLSTLNSCVDPFVYYFS. The Cytoplasmic portion of the chain corresponds to 280–346; it reads SSGFQADFHE…TGGQVACAES (67 aa). Over residues 307-330 the composition is skewed to basic and acidic residues; sequence MELKEQKGGEEQRADRPAERKTSE. The segment at 307-346 is disordered; sequence MELKEQKGGEEQRADRPAERKTSEHSQGCGTGGQVACAES.

This sequence belongs to the G-protein coupled receptor 1 family. In terms of tissue distribution, highest level in adipose tissue, and lower expression across all tissues tested. Expressed in sympathetic ganglia.

Its subcellular location is the cell membrane. Functionally, g protein-coupled receptor that is activated by a major product of dietary fiber digestion, the short chain fatty acids (SCFAs), and that plays a role in the regulation of whole-body energy homeostasis and in intestinal immunity. In omnivorous mammals, the short chain fatty acids acetate, propionate and butyrate are produced primarily by the gut microbiome that metabolizes dietary fibers. SCFAs serve as a source of energy but also act as signaling molecules. That G protein-coupled receptor is probably coupled to the pertussis toxin-sensitive, G(i/o)-alpha family of G proteins. Its activation results in the formation of inositol 1,4,5-trisphosphate, the mobilization of intracellular calcium, the phosphorylation of the MAPK3/ERK1 and MAPK1/ERK2 kinases and the inhibition of intracellular cAMP accumulation. Activated by SCFAs and by beta-hydroxybutyrate, a ketone body produced by the liver upon starvation, it inhibits N-type calcium channels and modulates the activity of sympathetic neurons through a signaling cascade involving the beta and gamma subunits of its coupled G protein, phospholipase C and MAP kinases. Thereby, it may regulate energy expenditure through the control of the sympathetic nervous system that controls for instance heart rate. Upon activation by SCFAs accumulating in the intestine, it may also signal to the brain via neural circuits which in turn would regulate intestinal gluconeogenesis. May also control the production of hormones involved in whole-body energy homeostasis. May for instance, regulate blood pressure through renin secretion. May also regulate secretion of the PYY peptide by enteroendocrine cells and control gut motility, intestinal transit rate, and the harvesting of energy from SCFAs produced by gut microbiota. May also indirectly regulate the production of LEP/Leptin, a hormone acting on the CNS to inhibit food intake, in response to the presence of short-chain fatty acids in the intestine. Finally, may also play a role in glucose homeostasis. Besides its role in energy homeostasis, may play a role in intestinal immunity. May mediate the activation of the inflammatory and immune response by SCFAs in the gut, regulating the rapid production of chemokines and cytokines by intestinal epithelial cells. Among SCFAs, the fatty acids containing less than 6 carbons, the most potent activators are probably propionate, butyrate and pentanoate while acetate is a poor activator. The protein is Free fatty acid receptor 3 (FFAR3) of Homo sapiens (Human).